Consider the following 274-residue polypeptide: Probable WRKY transcription factor 49 (274 aa).

Positions 108 to 173 (NSNGMCDDGY…YEGFHFHYTY (66 aa)) form a DNA-binding region, WRKY. The segment at 188-228 (KTKIHKHNAQDMNKKSQTQEESKEAQLGELTNQNHPVNKAQ) is disordered. Residues 193–222 (KHNAQDMNKKSQTQEESKEAQLGELTNQNH) are a coiled coil. Positions 195–213 (NAQDMNKKSQTQEESKEAQ) are enriched in basic and acidic residues. Residues 216 to 228 (ELTNQNHPVNKAQ) show a composition bias toward polar residues.

It belongs to the WRKY group II-c family.

It localises to the nucleus. In terms of biological role, transcription factor. Interacts specifically with the W box (5'-(T)TGAC[CT]-3'), a frequently occurring elicitor-responsive cis-acting element. This Arabidopsis thaliana (Mouse-ear cress) protein is Probable WRKY transcription factor 49 (WRKY49).